The primary structure comprises 120 residues: Holo-[acyl-carrier-protein] synthase (120 aa).

Mg(2+) is bound by residues Asp-8 and Glu-58.

It belongs to the P-Pant transferase superfamily. AcpS family. The cofactor is Mg(2+).

Its subcellular location is the cytoplasm. The enzyme catalyses apo-[ACP] + CoA = holo-[ACP] + adenosine 3',5'-bisphosphate + H(+). Transfers the 4'-phosphopantetheine moiety from coenzyme A to a Ser of acyl-carrier-protein. The protein is Holo-[acyl-carrier-protein] synthase of Limosilactobacillus reuteri (strain DSM 20016) (Lactobacillus reuteri).